The following is a 40-amino-acid chain: Photosystem II reaction center protein J (40 aa).

Residues 8-28 (IPLWIIGTVTGIIVIGLIGIF) traverse the membrane as a helical segment.

This sequence belongs to the PsbJ family. In terms of assembly, PSII is composed of 1 copy each of membrane proteins PsbA, PsbB, PsbC, PsbD, PsbE, PsbF, PsbH, PsbI, PsbJ, PsbK, PsbL, PsbM, PsbT, PsbX, PsbY, PsbZ, Psb30/Ycf12, at least 3 peripheral proteins of the oxygen-evolving complex and a large number of cofactors. It forms dimeric complexes.

The protein localises to the plastid. It localises to the chloroplast thylakoid membrane. Its function is as follows. One of the components of the core complex of photosystem II (PSII). PSII is a light-driven water:plastoquinone oxidoreductase that uses light energy to abstract electrons from H(2)O, generating O(2) and a proton gradient subsequently used for ATP formation. It consists of a core antenna complex that captures photons, and an electron transfer chain that converts photonic excitation into a charge separation. This is Photosystem II reaction center protein J from Morus indica (Mulberry).